The chain runs to 193 residues: dTTP/UTP pyrophosphatase (193 aa).

The Proton acceptor role is filled by aspartate 77.

It belongs to the Maf family. YhdE subfamily. It depends on a divalent metal cation as a cofactor.

The protein resides in the cytoplasm. The catalysed reaction is dTTP + H2O = dTMP + diphosphate + H(+). The enzyme catalyses UTP + H2O = UMP + diphosphate + H(+). In terms of biological role, nucleoside triphosphate pyrophosphatase that hydrolyzes dTTP and UTP. May have a dual role in cell division arrest and in preventing the incorporation of modified nucleotides into cellular nucleic acids. This chain is dTTP/UTP pyrophosphatase, found in Bacteroides fragilis (strain ATCC 25285 / DSM 2151 / CCUG 4856 / JCM 11019 / LMG 10263 / NCTC 9343 / Onslow / VPI 2553 / EN-2).